A 203-amino-acid chain; its full sequence is Putative 3-methyladenine DNA glycosylase (203 aa).

This sequence belongs to the DNA glycosylase MPG family.

The polypeptide is Putative 3-methyladenine DNA glycosylase (Desulfitobacterium hafniense (strain Y51)).